The sequence spans 92 residues: UPF0237 protein MM_0082 (92 aa).

The ACT domain maps to 7–81; the sequence is IITVIGSDRV…KSLGVEVKVQ (75 aa).

The protein belongs to the UPF0237 family.

This chain is UPF0237 protein MM_0082, found in Methanosarcina mazei (strain ATCC BAA-159 / DSM 3647 / Goe1 / Go1 / JCM 11833 / OCM 88) (Methanosarcina frisia).